The sequence spans 717 residues: Eukaryotic translation initiation factor 3 subunit B (717 aa).

The sufficient for interaction with HCR1 and TIF32 stretch occupies residues 1–89; that stretch reads MTVEDNLDID…VFIEYETGEM (89 aa). Positions 1–216 are sufficient for interaction with PIC8; it reads MTVEDNLDID…GVQLWGGPDW (216 aa). Residues 28 to 115 enclose the RRM domain; the sequence is SFIVVDGAPV…HKLLVNKLSE (88 aa). 6 WD repeats span residues 183-221, 223-284, 293-332, 445-484, 506-549, and 564-609; these read RERW…PPIC, FQHP…PVRT, GASM…LLDK, ELKD…NRHT, FDKK…DRKH, and SEHY…QREE.

Belongs to the eIF-3 subunit B family. Component of the eukaryotic translation initiation factor 3 (eIF-3) complex.

Its subcellular location is the cytoplasm. Its function is as follows. RNA-binding component of the eukaryotic translation initiation factor 3 (eIF-3) complex, which is involved in protein synthesis of a specialized repertoire of mRNAs and, together with other initiation factors, stimulates binding of mRNA and methionyl-tRNAi to the 40S ribosome. The eIF-3 complex specifically targets and initiates translation of a subset of mRNAs involved in cell proliferation. The protein is Eukaryotic translation initiation factor 3 subunit B of Yarrowia lipolytica (strain CLIB 122 / E 150) (Yeast).